We begin with the raw amino-acid sequence, 520 residues long: Endosomal/lysosomal proton channel TMEM175 (520 aa).

Positions 1-27 (MGENDESEIIEHHDDEEMEKRRPPRTH) are disordered. The Cytoplasmic portion of the chain corresponds to 1 to 49 (MGENDESEIIEHHDDEEMEKRRPPRTHAQSFLESVASSVKEGHSSTQSS). The span at 9-21 (IIEHHDDEEMEKR) shows a compositional bias: basic and acidic residues. A helical transmembrane segment spans residues 50 to 72 (HRLLAYSDALISIIATVMILPVA). Residues 51–57 (RLLAYSD) carry the RxxxFSD motif 1 motif. The Lumenal segment spans residues 73 to 93 (HTKIQEDEELKQSIQALLTTK). The segment at 74 to 79 (TKIQED) is short helix H1-1. Residues 81–87 (ELKQSIQ) are short helix H2-1. A helical transmembrane segment spans residues 94 to 116 (IAVYLMTFLIVTVAWAAHIRLFQ). The Cytoplasmic segment spans residues 117-122 (VIERID). Residues 123–144 (DTLALLNLACMMLITFLPYTFS) form a helical membrane-spanning segment. The Lumenal segment spans residues 145 to 154 (LMATFPNNIL). Residues 155–176 (GILLFCACVMVIGLIQALIVLY) traverse the membrane as a helical segment. The Cytoplasmic segment spans residues 177–200 (GFSHPFLLNDQIQMSENQAYYKQH). The next 2 membrane-spanning stretches (helical) occupy residues 201–221 (ILKV…FSFI) and 222–242 (FFQL…ISQC). The Cytoplasmic segment spans residues 243-274 (LKWIRSKAIGGQTDESPDSMPFYTYHPSEPLS). A helical transmembrane segment spans residues 275–299 (KERVEAFSDGVFAIVATLLILDICE). Residues 277 to 283 (RVEAFSD) carry the RxxxFSD motif 2 motif. The Lumenal portion of the chain corresponds to 300–326 (GNVPDPSVVKKKFDNSLIAALQEYGPE). Positions 305 to 313 (PSVVKKKFD) are short helix H1-2. The tract at residues 315 to 321 (SLIAALQ) is short helix H2-2. Residues 327–349 (YLAYFGSFVTVGLLWFVHHSLFL) form a helical membrane-spanning segment. The Cytoplasmic portion of the chain corresponds to 350–355 (HVTKAT). A helical transmembrane segment spans residues 356–377 (RLMGLFNTFSLAFVGGLPLAYQ). The Lumenal segment spans residues 378 to 392 (LTHESPRGSRNELEA). The helical transmembrane segment at 393-413 (VQISCVIIFFASLFQLAIWVT) threads the bilayer. The Cytoplasmic portion of the chain corresponds to 414–433 (ALFTERETLHPYVRYGGREH). A helical membrane pass occupies residues 434-457 (TFMLAKLSLYPCVALGTFFITCIL). Residues 458–459 (SR) are Lumenal-facing. Residues 460 to 486 (FSAPIFHMMEICIPFAFLLLRLLVRVA) form a helical membrane-spanning segment. At 487–520 (LALLRWLFCSARNDLERIPVEEEESRLPINDIVT) the chain is on the cytoplasmic side.

It belongs to the TMEM175 family. As to quaternary structure, homodimer.

It localises to the endosome membrane. The protein localises to the lysosome membrane. The enzyme catalyses H(+)(in) = H(+)(out). The catalysed reaction is K(+)(in) = K(+)(out). Its activity is regulated as follows. Active at low pH (under pH 4.6): proton channel activity is activated by luminal side protons. Polyunsaturated fatty acids, such as arachidonic acid, also activate the channel activity. Its function is as follows. Proton-activated proton channel that catalyzes proton efflux from endosomes and lysosomes to maintain a steady-state pH. Activated at low pH (under pH 4.6) by luminal side protons: selectively mediates lysosomal proton release from lysosomes, eliciting a proton leak that balances V-ATPase activity to maintain pH homeostasis. Regulation of lumenal pH stability is required for autophagosome-lysosome fusion. Also acts as a potassium channel at higher pH, regulating potassium conductance in endosomes and lysosomes. This is Endosomal/lysosomal proton channel TMEM175 from Danio rerio (Zebrafish).